A 422-amino-acid chain; its full sequence is Histone deacetylase B (422 aa).

Substrate is bound at residue aspartate 102. Catalysis depends on histidine 144, which acts as the Proton acceptor. Glycine 152 is a binding site for substrate. Aspartate 179, histidine 181, and aspartate 268 together coordinate a divalent metal cation. A substrate-binding site is contributed by tyrosine 307. Residues 399 to 422 (IDFDRDEDSKENMDKRKKKHNDFS) form a disordered region. A compositionally biased stretch (basic residues) spans 413–422 (KRKKKHNDFS).

This sequence belongs to the histone deacetylase family. HD type 1 subfamily.

The protein localises to the nucleus. It localises to the cytoplasm. The catalysed reaction is N(6)-acetyl-L-lysyl-[histone] + H2O = L-lysyl-[histone] + acetate. Its activity is inhibited by trichostatin A (TSA), a well known histone deacetylase inhibitor. Cytosolic activity is refractory to inhibition by TSA, while the nuclear activity is inhibited completely. Functionally, responsible for the deacetylation of lysine residues on the N-terminal part of the core histones (H2A, H2B, H3 and H4). Histone deacetylation plays an important role in transcriptional regulation, cell cycle progression and developmental events. Histone deacetylases act via the formation of large multiprotein complexes. May play a role in the regulation of the timing of gene expression during the development and in the definition aspects of the phenotype that mediate social behavior in genetically heterogeneous groups. This Dictyostelium discoideum (Social amoeba) protein is Histone deacetylase B (hdaB).